We begin with the raw amino-acid sequence, 201 residues long: Recombination protein RecR (201 aa).

Residues cysteine 57 to cysteine 72 form a C4-type zinc finger. One can recognise a Toprim domain in the interval glycine 81–proline 176.

The protein belongs to the RecR family.

In terms of biological role, may play a role in DNA repair. It seems to be involved in an RecBC-independent recombinational process of DNA repair. It may act with RecF and RecO. This Salmonella choleraesuis (strain SC-B67) protein is Recombination protein RecR.